Consider the following 144-residue polypeptide: Large ribosomal subunit protein uL14 (144 aa).

It belongs to the universal ribosomal protein uL14 family. In terms of assembly, part of the 50S ribosomal subunit. Forms a cluster with proteins L3 and L24e, part of which may contact the 16S rRNA in 2 intersubunit bridges.

Functionally, binds to 23S rRNA. Forms part of two intersubunit bridges in the 70S ribosome. The chain is Large ribosomal subunit protein uL14 from Pyrobaculum islandicum (strain DSM 4184 / JCM 9189 / GEO3).